A 145-amino-acid polypeptide reads, in one-letter code: Hemoglobin fetal subunit beta (145 aa).

Positions 1 to 145 (MLTAEEKASV…VANALAHRYH (145 aa)) constitute a Globin domain. Heme b-binding residues include H62 and H91.

Belongs to the globin family. Heterotetramer of two alpha chains and two beta chains.

The protein is Hemoglobin fetal subunit beta of Ovis aries (Sheep).